A 330-amino-acid polypeptide reads, in one-letter code: Phenylalanine--tRNA ligase alpha subunit (330 aa).

Glu-246 is a binding site for Mg(2+).

It belongs to the class-II aminoacyl-tRNA synthetase family. Phe-tRNA synthetase alpha subunit type 1 subfamily. Tetramer of two alpha and two beta subunits. Mg(2+) serves as cofactor.

Its subcellular location is the cytoplasm. It carries out the reaction tRNA(Phe) + L-phenylalanine + ATP = L-phenylalanyl-tRNA(Phe) + AMP + diphosphate + H(+). This Campylobacter jejuni subsp. doylei (strain ATCC BAA-1458 / RM4099 / 269.97) protein is Phenylalanine--tRNA ligase alpha subunit.